The sequence spans 357 residues: Glucose 1-dehydrogenase (357 aa).

Asp-38 is a binding site for Zn(2+). Residues Thr-40 and His-49 each contribute to the substrate site. Residues His-63 and Glu-64 each coordinate Zn(2+). Substrate-binding residues include Glu-114 and Glu-150. Glu-150 lines the Zn(2+) pocket. Residues 181–184 (NGSL), 207–208 (RR), Ser-228, 272–274 (LGV), and 301–303 (SVN) each bind NADP(+). Position 303 (Asn-303) interacts with substrate.

It belongs to the zinc-containing alcohol dehydrogenase family. Glucose 1-dehydrogenase subfamily. As to quaternary structure, homodimer. Zn(2+) serves as cofactor.

It catalyses the reaction D-glucose + NAD(+) = D-glucono-1,5-lactone + NADH + H(+). It carries out the reaction D-glucose + NADP(+) = D-glucono-1,5-lactone + NADPH + H(+). Activated by molar concentrations of KCl or NaCl. Inhibited by EDTA in vitro. In terms of biological role, catalyzes the NAD(P)(+)-dependent oxidation of D-glucose to D-gluconate. Displays broad substrate specificity since it is able to catalyze the oxidation of a number of alternative aldose sugars, such as D-xylose, D-galactose, and D-fucose, to the corresponding glyconate. Can utilize both NAD(+) and NADP(+) as electron acceptor, with a preference for NADP(+). Physiologically, seems to be involved in the degradation of glucose through a modified Entner-Doudoroff pathway. The polypeptide is Glucose 1-dehydrogenase (Haloferax mediterranei (strain ATCC 33500 / DSM 1411 / JCM 8866 / NBRC 14739 / NCIMB 2177 / R-4) (Halobacterium mediterranei)).